A 423-amino-acid chain; its full sequence is MASALEQFVNSVRQLSSQGQMTQLCELINKSGELLAKNLSHLDTVLGALDVQEHSLGVLAVLFVKFSMPSIPDFETLFSQVQLFISTCNGEHIRYATDTFAGLCHQLTNALVERKQPLRGICVIRQAIDKMQMNANQLTSIHGDLCQLSLLAKCFKPALAYLDVDMMDICKENGAYDAKPFLCYYYYGGMIYTGLKNFERAMYFYEQAITTPAMAVSHIMLEAYKKYILVSLILHGKVQQLPKYTSQVVGRFIKPLSNAYHELAQVYSTNNPAELRNLVSKHNETFTRDNNMGLVKQCLSSLYKKNIQRLTKTFLTLSLQDMASRVQLSGAQEAEKYVLYMIEDGEIFASINQKDGMVCFHDSPEKYNNPAMLHNIDQEMLRCIDLDDRLKAMDQEITVNPQFVQKSMGSQEDDSGSKPSSYS.

The PCI domain occupies Asn197 to Glu365. Over residues Pro401 to Ser410 the composition is skewed to polar residues. The tract at residues Pro401–Ser423 is disordered.

It belongs to the CSN3 family. Component of the CSN complex, probably composed of cops1, cops2, cops3, cops4, cops5, cops6, cops7, cops8 and cops9.

Its subcellular location is the cytoplasm. It localises to the nucleus. In terms of biological role, component of the COP9 signalosome complex (CSN), a complex involved in various cellular and developmental processes. The CSN complex is an essential regulator of the ubiquitin (Ubl) conjugation pathway by mediating the deneddylation of the cullin subunits of E3 ligase complexes, leading to modify the Ubl ligase activity. The polypeptide is COP9 signalosome complex subunit 3 (cops3) (Xenopus laevis (African clawed frog)).